An 83-amino-acid polypeptide reads, in one-letter code: Type 3 secretion system needle filament protein (83 aa).

This sequence belongs to the SctF family. The core secretion machinery of the T3SS is composed of approximately 20 different proteins, including cytoplasmic components, a base, an export apparatus and a needle. This subunit polymerizes and forms the helical needle filament. Interacts with the needle tip protein IpaD/SctA. Interacts with the export apparatus components SpaP/SctR, SpaQ/SctS and SpaR/SctT.

Its subcellular location is the secreted. It localises to the cell surface. Functionally, component of the type III secretion system (T3SS), also called injectisome, which is used to inject bacterial effector proteins into eukaryotic host cells. MxiH/SctF forms the external needle filament that protrudes from the bacterial surface. During infection, can induce innate immune responses. The needle proteins interact with host TLR2 or TLR4, and induce signaling by NF-kappa-B and/or AP-1. This activation is MyD88 dependent and results in increased expression of cytokines, including TNF-alpha, IL-6 and IL-8. The polypeptide is Type 3 secretion system needle filament protein (Shigella flexneri).